The primary structure comprises 149 residues: 3-hydroxyacyl-[acyl-carrier-protein] dehydratase FabZ (149 aa).

His-53 is an active-site residue.

Belongs to the thioester dehydratase family. FabZ subfamily.

The protein resides in the cytoplasm. The catalysed reaction is a (3R)-hydroxyacyl-[ACP] = a (2E)-enoyl-[ACP] + H2O. Functionally, involved in unsaturated fatty acids biosynthesis. Catalyzes the dehydration of short chain beta-hydroxyacyl-ACPs and long chain saturated and unsaturated beta-hydroxyacyl-ACPs. In Neisseria meningitidis serogroup B (strain ATCC BAA-335 / MC58), this protein is 3-hydroxyacyl-[acyl-carrier-protein] dehydratase FabZ.